Reading from the N-terminus, the 144-residue chain is Large ribosomal subunit protein uL11 (144 aa).

Belongs to the universal ribosomal protein uL11 family. As to quaternary structure, part of the ribosomal stalk of the 50S ribosomal subunit. Interacts with L10 and the large rRNA to form the base of the stalk. L10 forms an elongated spine to which L12 dimers bind in a sequential fashion forming a multimeric L10(L12)X complex. Post-translationally, one or more lysine residues are methylated.

Its function is as follows. Forms part of the ribosomal stalk which helps the ribosome interact with GTP-bound translation factors. The chain is Large ribosomal subunit protein uL11 from Rhodococcus opacus (strain B4).